The chain runs to 726 residues: Delta-1-pyrroline-5-carboxylate synthase B (726 aa).

The interval 1–296 (MTEIDRSRAF…WAPVVDTTSR (296 aa)) is glutamate 5-kinase. The substrate site is built by Ser60, Asp157, and Asn176. Residues 196 to 197 (SD) and 236 to 242 (RGGMTAK) each bind ATP. The tract at residues 297–717 (DMAVAARESS…YTHKDLPVLQ (421 aa)) is gamma-glutamyl phosphate reductase.

In the N-terminal section; belongs to the glutamate 5-kinase family. The protein in the C-terminal section; belongs to the gamma-glutamyl phosphate reductase family.

The enzyme catalyses L-glutamate + ATP = L-glutamyl 5-phosphate + ADP. The catalysed reaction is L-glutamate 5-semialdehyde + phosphate + NADP(+) = L-glutamyl 5-phosphate + NADPH + H(+). It participates in amino-acid biosynthesis; L-proline biosynthesis; L-glutamate 5-semialdehyde from L-glutamate: step 1/2. Its pathway is amino-acid biosynthesis; L-proline biosynthesis; L-glutamate 5-semialdehyde from L-glutamate: step 2/2. Functionally, P5CS plays a key role in proline biosynthesis, leading to osmoregulation in plants. The chain is Delta-1-pyrroline-5-carboxylate synthase B (P5CSB) from Arabidopsis thaliana (Mouse-ear cress).